Here is a 500-residue protein sequence, read N- to C-terminus: ADP,ATP carrier protein 5 (500 aa).

Transmembrane regions (helical) follow at residues 21-41 (IYNYELGKFIPMSALMFCILF), 62-82 (IAGFAKVYCVTPAAALFVIIY), 94-114 (IFYYLTAFFIGFFVLFAFVIY), 149-169 (YIVYYSLAELWPNIFYVLLFW), 184-204 (FYTLFSLFGNSSLILVGFLMM), 224-244 (ITLVQISTILVTIVAVICCLL), 287-307 (LWLLLICSAAFGFAINLVEAV), 328-348 (LYILWTGVAIMVMTIIGNNVM), 357-377 (AVISPVIIMVTGVLFFVLIVF), 381-401 (ILSLFDGAILMSPLALAVSIG), and 469-489 (SISPVLMVVFTFVCLAWIYAV).

This sequence belongs to the ADP/ATP translocase tlc family.

It is found in the cell membrane. Functionally, provides the rickettsial cell with host ATP in exchange for rickettsial ADP. This is an obligate exchange system. This energy acquiring activity is an important component of rickettsial parasitism. The protein is ADP,ATP carrier protein 5 (tlcE) of Rickettsia bellii (strain RML369-C).